A 121-amino-acid polypeptide reads, in one-letter code: Putative SNURF-like protein (121 aa).

This sequence belongs to the SNURF family.

The protein is Putative SNURF-like protein (SNURFL) of Homo sapiens (Human).